The following is a 49-amino-acid chain: Cytochrome b559 subunit beta (49 aa).

A helical membrane pass occupies residues 24–40; sequence WLAVHVLGVPTVFFLGA. His28 contributes to the heme binding site.

This sequence belongs to the PsbE/PsbF family. In terms of assembly, heterodimer of an alpha subunit and a beta subunit. PSII is composed of 1 copy each of membrane proteins PsbA, PsbB, PsbC, PsbD, PsbE, PsbF, PsbH, PsbI, PsbJ, PsbK, PsbL, PsbM, PsbT, PsbX, PsbY, Psb30/Ycf12, peripheral proteins PsbO, CyanoQ (PsbQ), PsbU, PsbV and a large number of cofactors. It forms dimeric complexes. Heme b is required as a cofactor.

The protein localises to the cellular thylakoid membrane. This b-type cytochrome is tightly associated with the reaction center of photosystem II (PSII). PSII is a light-driven water:plastoquinone oxidoreductase that uses light energy to abstract electrons from H(2)O, generating O(2) and a proton gradient subsequently used for ATP formation. It consists of a core antenna complex that captures photons, and an electron transfer chain that converts photonic excitation into a charge separation. The polypeptide is Cytochrome b559 subunit beta (Prochlorococcus marinus (strain MIT 9303)).